Reading from the N-terminus, the 467-residue chain is Asparagine--tRNA ligase (467 aa).

This sequence belongs to the class-II aminoacyl-tRNA synthetase family. Homodimer.

It localises to the cytoplasm. The catalysed reaction is tRNA(Asn) + L-asparagine + ATP = L-asparaginyl-tRNA(Asn) + AMP + diphosphate + H(+). The sequence is that of Asparagine--tRNA ligase from Histophilus somni (strain 129Pt) (Haemophilus somnus).